A 183-amino-acid polypeptide reads, in one-letter code: Ras-related protein Rap-2a (183 aa).

GTP is bound at residue 10–17 (GSGGVGKS). An Effector region motif is present at residues 32 to 40 (YDPTIEDFY). Residues 57-61 (DTAGT) and 116-119 (NKVD) contribute to the GTP site. S-palmitoyl cysteine attachment occurs at residues C176 and C177. C180 is modified (cysteine methyl ester). The S-farnesyl cysteine moiety is linked to residue C180. Residues 181–183 (NIQ) constitute a propeptide, removed in mature form.

The protein belongs to the small GTPase superfamily. Ras family. In terms of assembly, interacts with PLCE1. Interacts with ARHGAP29, SGSM1, SGSM2 and SGSM3. Interacts (GTP-bound form preferentially) with MAP4K4. Interacts with MINK1. Interacts with cytoskeletal actin. Interacts (GTP-bound form) with RUNDC3A. Interacts (GTP-bound form preferentially) with TNIK (via the CNH domain); the interaction is direct and recruits RAP2A to the E3 ubiquitin ligase NEDD4. Interacts with RGS14; the interaction is GTP-dependent. Post-translationally, ubiquitinated; undergoes 'Lys-63' monoubiquitination and diubiquitination by NEDD4. Multiple lysine residues are probably modified. Ubiquitination requires TNIK, prevents interaction with effectors and inactivates RAP2A. Ubiquitination by the ECS(RAB40B) complex leads to RAP2A localization to lamellipodia plasma membrane, activation, and regulation of sorting at early endosomes for recycling to the lamellipodia plasma membrane. In terms of processing, palmitoylated. Palmitoylation is required for association with recycling endosome membranes and activation of TNIK. As to expression, expressed in granular layer of the cerebellum, forebrain, striatum, layer V of the cortex, olfactory cortex, tubercules, subthalamic and hippocampus, particularly in the CA2 region, to a lesser extent in the CA1 region and the external layer of the dentate gyrus. Expressed in neurons.

It localises to the midbody. The protein localises to the cell projection. It is found in the lamellipodium membrane. Its subcellular location is the golgi apparatus. The protein resides in the recycling endosome membrane. It localises to the lysosome. It catalyses the reaction GTP + H2O = GDP + phosphate + H(+). With respect to regulation, activated by the guanine nucleotide-exchange factors RAPGEF3 and RAPGEF4 in a cAMP-dependent manner. Nucleotide exchange is also specifically stimulated by RAPGEF5, RASGEF1A and RASGEF1B. In terms of biological role, small GTP-binding protein which cycles between a GDP-bound inactive and a GTP-bound active form. In its active form interacts with and regulates several effectors including MAP4K4, MINK1 and TNIK. Part of a signaling complex composed of NEDD4, RAP2A and TNIK which regulates neuronal dendrite extension and arborization during development. More generally, it is part of several signaling cascades and may regulate cytoskeletal rearrangements, cell migration, cell adhesion and cell spreading. This chain is Ras-related protein Rap-2a, found in Mus musculus (Mouse).